Here is a 499-residue protein sequence, read N- to C-terminus: Glucose-6-phosphate exchanger SLC37A2 (499 aa).

The helical transmembrane segment at 21–40 threads the bilayer; the sequence is YRGFIIVMTFLFYTCYHMSR. Asn53, Asn62, and Asn66 each carry an N-linked (GlcNAc...) asparagine glycan. 11 helical membrane passes run 86–106, 116–136, 138–158, 187–207, 208–228, 302–322, 334–354, 362–382, 391–411, 434–454, and 458–478; these read GSLDTAFLVSYAIGMFFSGIF, LSGGMIICGIFTSFMGLGYYW, IHALWYYILFQILNGLAQTTG, AVGNILGSLIAGAFVSTAWGL, SFIVPGIIIAAFGIFCFFFLV, LCLLFAKLVSYTFLYWLPLYI, GDLSTLFDVGGIIGGILAGGI, AITCTIMLILTAPMLFIYNYL, VAMLIVCGILVNGPYSLITTA, AIIDGSGSIGAALGPSLAGVL, and GWNYVFYMLIAADICACLLLV.

This sequence belongs to the major facilitator superfamily. Organophosphate:Pi antiporter (OPA) (TC 2.A.1.4) family.

Its subcellular location is the endoplasmic reticulum membrane. It carries out the reaction D-glucose 6-phosphate(in) + phosphate(out) = D-glucose 6-phosphate(out) + phosphate(in). In terms of biological role, inorganic phosphate and glucose-6-phosphate antiporter. May transport cytoplasmic glucose-6-phosphate into the lumen of the endoplasmic reticulum and translocate inorganic phosphate into the opposite direction. This chain is Glucose-6-phosphate exchanger SLC37A2, found in Xenopus tropicalis (Western clawed frog).